Here is a 73-residue protein sequence, read N- to C-terminus: UPF0435 protein lin1819 (73 aa).

The protein belongs to the UPF0435 family.

This is UPF0435 protein lin1819 from Listeria innocua serovar 6a (strain ATCC BAA-680 / CLIP 11262).